The following is a 633-amino-acid chain: MRLSTAQLIAIAYYMLSIGATVPQVDGQGETEEALIQKRSYDYYQEPCDDYPQQQQQQEPCDYPQQQQQEEPCDYPQQQPQEPCDYPQQPQEPCDYPQQPQEPCDYPQQPQEPCDNPPQPDVPCDNPPQPDVPCDNPPQPDIPCDNPPQPDIPCDNPPQPDQPDDNPPIPNIPTDWIPNIPTDWIPDIPEKPTTPATTPNIPATTTTSESSSSSSSSSSTTPKTSASTTPESSVPATTPNTSVPTTSSESTTPATSPESSVPVTSGSSILTTTSESSSAPATTPNTSVPTTTTEAKSSSTPLTTTTEHDTTVVTVTSCSNSVCTESEVTTGVIVITSKDTIYTTYCPLTETTPVSTAPATETPTGTVSTSTEQSTTVITVTSCSESSCTESEVTTGVVVVTSEETVYTTFCPLTENTPGTDSTPEASIPPMETIPAGSEPSMPAGETSPAVPKPEVPATESAPVPEMTPAGSQPSMPAGETSPAVPKSDVSATESAPAPEMTPAGTETKPAAPKSSAPATEPSPVAPGTESAPAGPGASSSPKSSVLASETSPIAPGAETAPAGSSGAITIPESSAVVSTTEGAIPTTLESVPLMQPSANYSSVAPISTFEGAGNNMRLTFGAAIIGIAAFLI.

Residues 1–27 form the signal peptide; the sequence is MRLSTAQLIAIAYYMLSIGATVPQVDG. 2 disordered regions span residues 40-306 and 411-569; these read SYDY…TTTT and CPLT…SGAI. The segment covering 42–114 has biased composition (low complexity); that stretch reads DYYQEPCDDY…DYPQQPQEPC (73 aa). The 1; approximate repeat unit spans residues 46-58; sequence EPCDDYPQQQQQQ. A 14 X 10 AA tandem repeats of [EVIQ]-P-[CDT]-D-[YNW]-P-[PQ]-[QI]-[QP]-[QDN] region spans residues 46-187; sequence EPCDDYPQQQ…PNIPTDWIPD (142 aa). Residues 59–69 form a 2; approximate repeat; the sequence is EPCDYPQQQQQ. One copy of the 3; approximate repeat lies at 70–81; sequence EEPCDYPQQQPQ. Repeat copies occupy residues 82–91, 92–101, 102–111, 112–121, 122–131, 132–141, 142–151, 152–161, and 162–171. A compositionally biased stretch (pro residues) spans 115-171; that stretch reads DNPPQPDVPCDNPPQPDVPCDNPPQPDIPCDNPPQPDIPCDNPPQPDQPDDNPPIPN. The stretch at 172-179 is one 13; truncated repeat; it reads IPTDWIPN. Low complexity-rich tracts occupy residues 172–183 and 193–306; these read IPTDWIPNIPTD and TTPA…TTTT. Residues 180–187 form a 14; truncated repeat; sequence IPTDWIPD. N-linked (GlcNAc...) asparagine glycans are attached at residues Asn-240 and Asn-285. A compositionally biased stretch (polar residues) spans 414 to 425; that stretch reads TENTPGTDSTPE. Residues 507 to 549 show a composition bias toward low complexity; that stretch reads ETKPAAPKSSAPATEPSPVAPGTESAPAGPGASSSPKSSVLAS. A glycan (N-linked (GlcNAc...) asparagine) is linked at Asn-600. Gly-612 carries the GPI-anchor amidated glycine lipid modification. Residues 613 to 633 constitute a propeptide, removed in mature form; that stretch reads AGNNMRLTFGAAIIGIAAFLI.

It belongs to the HWP1 family. Post-translationally, the GPI-anchor is attached to the protein in the endoplasmic reticulum and serves to target the protein to the cell surface. There, the glucosamine-inositol phospholipid moiety is cleaved off and the GPI-modified mannoprotein is covalently attached via its lipidless GPI glycan remnant to the 1,6-beta-glucan of the outer cell wall layer. In terms of processing, N- and O-glycosylated.

The protein localises to the secreted. It localises to the cell wall. Its subcellular location is the membrane. In terms of biological role, major hyphal cell wall protein which plays a role of adhesin and is required for mating, normal hyphal development, cell-to-cell adhesive functions necessary for biofilm integrity, attachment to host, and virulence. Promotes interactions with host and bacterial molecules, thus leading to effective colonization within polymicrobial communities. Plays a crucial role in gastrointestinal colonization, in mucosal symptomatic and asymptomatic infections, in vaginitis, as well as in lethal oroesophageal candidiasis, caused by the combined action of fungal virulence factors and host inflammatory responses when protective immunity is absent. This is Hyphal wall protein 1 from Candida albicans (strain WO-1) (Yeast).